Here is a 499-residue protein sequence, read N- to C-terminus: Cryptochrome-1 (499 aa).

Residues Arg190, Ser218, Ser220, Gln261, His328, 360–362, Cys366, and Asn369 contribute to the FAD site; that span reads DAD.

It belongs to the DNA photolyase class-1 family. In terms of assembly, interacts with tim and per; promoted by light conditions. Requires FAD as cofactor.

The protein localises to the cytoplasm. The protein resides in the perinuclear region. It is found in the nucleus. Blue light-dependent regulator that is the input of the circadian feedback loop. Has no photolyase activity for cyclobutane pyrimidine dimers or 6-4 photoproducts. Regulation of expression by light suggests a role in photoreception for locomotor activity rhythms. Functions, together with per, as a transcriptional repressor required for the oscillation of peripheral circadian clocks and for the correct specification of clock cells. Genes directly activated by the transcription factors Clock (Clk) and cycle (cyc) are repressed by cry. This Culex quinquefasciatus (Southern house mosquito) protein is Cryptochrome-1.